A 30-amino-acid polypeptide reads, in one-letter code: Uperin-6.1 (30 aa).

In terms of tissue distribution, expressed by the skin dorsal glands.

It is found in the secreted. The protein is Uperin-6.1 of Uperoleia inundata (Floodplain toadlet).